Here is a 448-residue protein sequence, read N- to C-terminus: tRNA modification GTPase MnmE (448 aa).

(6S)-5-formyl-5,6,7,8-tetrahydrofolate contacts are provided by Arg-24, Glu-81, and Lys-120. The TrmE-type G domain maps to 216 to 373 (GLNVVLVGAP…LKRTLLREAG (158 aa)). Position 226 (Asn-226) interacts with K(+). Residues 226-231 (NVGKSS), 245-251 (TDIAGTT), and 270-273 (DTAG) contribute to the GTP site. Mg(2+) is bound at residue Ser-230. K(+) contacts are provided by Thr-245, Ile-247, and Thr-250. Position 251 (Thr-251) interacts with Mg(2+). Lys-448 is a (6S)-5-formyl-5,6,7,8-tetrahydrofolate binding site.

This sequence belongs to the TRAFAC class TrmE-Era-EngA-EngB-Septin-like GTPase superfamily. TrmE GTPase family. Homodimer. Heterotetramer of two MnmE and two MnmG subunits. It depends on K(+) as a cofactor.

The protein resides in the cytoplasm. In terms of biological role, exhibits a very high intrinsic GTPase hydrolysis rate. Involved in the addition of a carboxymethylaminomethyl (cmnm) group at the wobble position (U34) of certain tRNAs, forming tRNA-cmnm(5)s(2)U34. This Neisseria meningitidis serogroup A / serotype 4A (strain DSM 15465 / Z2491) protein is tRNA modification GTPase MnmE.